The primary structure comprises 423 residues: Kynureninase (423 aa).

Residues leucine 105, serine 106, 133 to 136 (FPSD), aspartate 218, histidine 221, and tyrosine 243 contribute to the pyridoxal 5'-phosphate site. N6-(pyridoxal phosphate)lysine is present on lysine 244. Residues tryptophan 273 and asparagine 301 each contribute to the pyridoxal 5'-phosphate site.

The protein belongs to the kynureninase family. In terms of assembly, homodimer. It depends on pyridoxal 5'-phosphate as a cofactor.

It catalyses the reaction L-kynurenine + H2O = anthranilate + L-alanine + H(+). It carries out the reaction 3-hydroxy-L-kynurenine + H2O = 3-hydroxyanthranilate + L-alanine + H(+). The protein operates within amino-acid degradation; L-kynurenine degradation; L-alanine and anthranilate from L-kynurenine: step 1/1. Its pathway is cofactor biosynthesis; NAD(+) biosynthesis; quinolinate from L-kynurenine: step 2/3. Catalyzes the cleavage of L-kynurenine (L-Kyn) and L-3-hydroxykynurenine (L-3OHKyn) into anthranilic acid (AA) and 3-hydroxyanthranilic acid (3-OHAA), respectively. This is Kynureninase from Xanthomonas axonopodis pv. citri (strain 306).